The chain runs to 362 residues: D-alanine--D-alanine ligase (362 aa).

The ATP-grasp domain maps to 134–345 (KILAQRAGVP…YPDLITRLIR (212 aa)). Position 170 to 225 (170 to 225 (GQLGTSNLFVKPSNQGSSVGITHVTDDSNYAEALAEAFKYDDKVLVEEGIVGTEVE)) interacts with ATP. 3 residues coordinate Mg(2+): Asp-298, Glu-312, and Asn-314.

It belongs to the D-alanine--D-alanine ligase family. The cofactor is Mg(2+). Mn(2+) serves as cofactor.

It localises to the cytoplasm. It carries out the reaction 2 D-alanine + ATP = D-alanyl-D-alanine + ADP + phosphate + H(+). The protein operates within cell wall biogenesis; peptidoglycan biosynthesis. In terms of biological role, cell wall formation. The chain is D-alanine--D-alanine ligase from Lactobacillus delbrueckii subsp. bulgaricus (strain ATCC 11842 / DSM 20081 / BCRC 10696 / JCM 1002 / NBRC 13953 / NCIMB 11778 / NCTC 12712 / WDCM 00102 / Lb 14).